We begin with the raw amino-acid sequence, 226 residues long: Thiamine-phosphate synthase (226 aa).

Residues 46–50 (QLRDK) and Asn-87 contribute to the 4-amino-2-methyl-5-(diphosphooxymethyl)pyrimidine site. Residues Asp-88 and Asp-107 each coordinate Mg(2+). Ser-126 lines the 4-amino-2-methyl-5-(diphosphooxymethyl)pyrimidine pocket. 152 to 154 (TPT) provides a ligand contact to 2-[(2R,5Z)-2-carboxy-4-methylthiazol-5(2H)-ylidene]ethyl phosphate. Residue Lys-155 coordinates 4-amino-2-methyl-5-(diphosphooxymethyl)pyrimidine. Residue Gly-183 coordinates 2-[(2R,5Z)-2-carboxy-4-methylthiazol-5(2H)-ylidene]ethyl phosphate.

It belongs to the thiamine-phosphate synthase family. Mg(2+) is required as a cofactor.

The catalysed reaction is 2-[(2R,5Z)-2-carboxy-4-methylthiazol-5(2H)-ylidene]ethyl phosphate + 4-amino-2-methyl-5-(diphosphooxymethyl)pyrimidine + 2 H(+) = thiamine phosphate + CO2 + diphosphate. The enzyme catalyses 2-(2-carboxy-4-methylthiazol-5-yl)ethyl phosphate + 4-amino-2-methyl-5-(diphosphooxymethyl)pyrimidine + 2 H(+) = thiamine phosphate + CO2 + diphosphate. It carries out the reaction 4-methyl-5-(2-phosphooxyethyl)-thiazole + 4-amino-2-methyl-5-(diphosphooxymethyl)pyrimidine + H(+) = thiamine phosphate + diphosphate. It functions in the pathway cofactor biosynthesis; thiamine diphosphate biosynthesis; thiamine phosphate from 4-amino-2-methyl-5-diphosphomethylpyrimidine and 4-methyl-5-(2-phosphoethyl)-thiazole: step 1/1. In terms of biological role, condenses 4-methyl-5-(beta-hydroxyethyl)thiazole monophosphate (THZ-P) and 2-methyl-4-amino-5-hydroxymethyl pyrimidine pyrophosphate (HMP-PP) to form thiamine monophosphate (TMP). The protein is Thiamine-phosphate synthase of Mycobacterium sp. (strain KMS).